Reading from the N-terminus, the 91-residue chain is ITCGQVSSSLAPCIGYVRGGGAVPPACCNGIRNVNNLARTTPDRRTACNCLKQLSGSISGVNPNNAAALPGKCGVNIPYKISASTNCATVK.

Cystine bridges form between C3-C50, C13-C27, C28-C73, and C48-C87.

It belongs to the plant LTP family.

In terms of biological role, plant non-specific lipid-transfer proteins transfer phospholipids as well as galactolipids across membranes. May play a role in wax or cutin deposition in the cell walls of expanding epidermal cells and certain secretory tissues. This is Non-specific lipid-transfer protein 1 from Prunus armeniaca (Apricot).